Reading from the N-terminus, the 529-residue chain is NADPH-dependent thioredoxin reductase 3 (529 aa).

Residues 1–67 (MAASPKIGIG…SSDSLRLRVS (67 aa)) constitute a chloroplast transit peptide. The segment at 54–78 (TRTRSSDSLRLRVSATANSPSSSSS) is disordered. A compositionally biased stretch (low complexity) spans 64 to 78 (LRVSATANSPSSSSS). Residues 91-94 (SGPA), 113-120 (EGYQMGGV), Asn133, Val166, and Cys220 contribute to the FAD site. Cys217 and Cys220 are joined by a disulfide. NADP(+) contacts are provided by Thr240, Arg265, Ile324, and Tyr344. Residues Asp364 and 371–374 (RQAV) contribute to the FAD site. Arg371 serves as a coordination point for NADP(+). One can recognise a Thioredoxin domain in the interval 403–529 (PQTEEAKKEF…EYREFIEANK (127 aa)). Catalysis depends on nucleophile residues Cys454 and Cys457. Cys454 and Cys457 are oxidised to a cystine.

It belongs to the class-II pyridine nucleotide-disulfide oxidoreductase family. As to quaternary structure, may homodimerize. Interacts with the 2-Cys peroxiredoxin BAS1. FAD is required as a cofactor.

It localises to the plastid. Its subcellular location is the chloroplast. It carries out the reaction [thioredoxin]-dithiol + NADP(+) = [thioredoxin]-disulfide + NADPH + H(+). Its function is as follows. Thioredoxin reductase (TR) that exhibits both TR and thioredoxin (Trx) activities. Contains a C-terminal functional Trx domain. Functions as an electron donor for plastidial 2-Cys peroxiredoxins and participates in a NADPH-dependent hydrogen peroxide scavenging system in chloroplasts in the dark. Required for chlorophyll biosynthesis and biogenesis of the photosynthetic apparatus. Activates aerobic cyclase which converts Mg-protoporhyrin monomethyl ester into protochlorophyllide. Involved in a light-dependent regulation of starch biosynthesis by redox activation of the ADP-glucose pyrophosphorylase (AGPase), a central enzyme of starch synthesis. The chain is NADPH-dependent thioredoxin reductase 3 from Arabidopsis thaliana (Mouse-ear cress).